Here is a 28-residue protein sequence, read N- to C-terminus: Dermaseptin-2 (28 aa).

Glutamine 28 carries the post-translational modification Glutamine amide.

Belongs to the frog skin active peptide (FSAP) family. Dermaseptin subfamily. In terms of tissue distribution, expressed by the skin glands.

It localises to the secreted. Functionally, antimicrobial peptide with activity against the Gram-positive bacterium S.aureus, and the Gram-negative bacteria E.coli and P.aeruginosa. Probably acts by disturbing membrane functions with its amphipathic structure. Has an activity of stimulation of insulin release, which may protect the species from being eaten by predators by causing fatal hypoglycemia. Has hemolytic activity (60% hemolysis at 128 ug/ml). This chain is Dermaseptin-2, found in Phyllomedusa tarsius (Brownbelly leaf frog).